The sequence spans 989 residues: Phosphoenolpyruvate carboxylase (989 aa).

Residues H175 and K630 contribute to the active site.

The protein belongs to the PEPCase type 1 family. The cofactor is Mg(2+).

The enzyme catalyses oxaloacetate + phosphate = phosphoenolpyruvate + hydrogencarbonate. Forms oxaloacetate, a four-carbon dicarboxylic acid source for the tricarboxylic acid cycle. This Prochlorococcus marinus subsp. pastoris (strain CCMP1986 / NIES-2087 / MED4) protein is Phosphoenolpyruvate carboxylase.